A 345-amino-acid chain; its full sequence is Phosphoribosylformylglycinamidine cyclo-ligase (345 aa).

The protein belongs to the AIR synthase family.

The protein resides in the cytoplasm. The enzyme catalyses 2-formamido-N(1)-(5-O-phospho-beta-D-ribosyl)acetamidine + ATP = 5-amino-1-(5-phospho-beta-D-ribosyl)imidazole + ADP + phosphate + H(+). The protein operates within purine metabolism; IMP biosynthesis via de novo pathway; 5-amino-1-(5-phospho-D-ribosyl)imidazole from N(2)-formyl-N(1)-(5-phospho-D-ribosyl)glycinamide: step 2/2. The protein is Phosphoribosylformylglycinamidine cyclo-ligase of Anaeromyxobacter dehalogenans (strain 2CP-C).